The chain runs to 671 residues: MPPIKRQPRGWVLPGYRYLGPFNPLDNGEPVNNADRAAQLHDHAYSELIKSGKNPYLYFNKADEKFIDDLKDDWSIGGIIGSSFFKIKRAVAPALGNKERAQKRHFYFANSNKGAKKTKKSEPKPGTSKMSDTDIQDQQPDTVDAPQNTSGGGTGSIGGGKGSGVGISTGGWVGGSHFSDKYVVTKNTRQFITTIQNGHLYKTEAIETTNQSGKSQRCVTTPWTYFNFNQYSCHFSPQDWQRLTNEYKRFRPKAMQVKIYNLQIKQILSNGADTTYNNDLTAGVHIFCDGEHAYPNASHPWDEDVMPDLPYKTWKLFQYGYIPIENELADLDGNAAGGNATEKALLYQMPFFLLENSDHQVLRTGESTEFTFNFDCEWVNNERAYIPPGLMFNPKVPTRRVQYIRQNGSTAASTGRIQPYSKPTSWMTGPGLLSAQRVGPQSSDTAPFMVCTNPEGTHINTGAAGFGSGFDPPNGCLAPTNLEYKLQWYQTPEGTGNNGNIIANPSLSMLRDQLLYKGNQTTYNLVGDIWMFPNQVWDRFPITRENPIWCKKPRADKHTIMDPFDGSIAMDHPPGTIFIKMAKIPVPTASNADSYLNIYCTGQVSCEIVWEVERYATKNWRPERRHTALGMSLGGESNYTPTYHVDPTGAYIQPTSYDQCMPVKTNINKVL.

Residues 11–66 (WVLPGYRYLGPFNPLDNGEPVNNADRAAQLHDHAYSELIKSGKNPYLYFNKADEKF) are phospholipase A2-like. Positions 106–161 (FYFANSNKGAKKTKKSEPKPGTSKMSDTDIQDQQPDTVDAPQNTSGGGTGSIGGGK) are disordered. Over residues 136 to 149 (QDQQPDTVDAPQNT) the composition is skewed to polar residues. A compositionally biased stretch (gly residues) spans 150–161 (SGGGTGSIGGGK). Positions 614-625 (RYATKNWRPERR) match the Nuclear localization signal motif.

This sequence belongs to the parvoviridae capsid protein family. In terms of assembly, heteromultimer of isoform Minor capsid protein VP1, isoform Minor capsid protein VP2 and isoform Major capsid protein VP3. Isoform Major capsid protein VP3 is a homomultimer. Isoform Major capsid protein VP3 is 10 fold more abundant than the minor capsid proteins VP1 and VP2.

The protein localises to the virion. Its subcellular location is the host nucleus. It localises to the host cytoplasm. It catalyses the reaction a 1,2-diacyl-sn-glycero-3-phosphocholine + H2O = a 1-acyl-sn-glycero-3-phosphocholine + a fatty acid + H(+). In terms of biological role, capsid proteins self-assembles to form an icosahedral capsid with a T=1 symmetry, about 26 nm in diameter, and consisting of 60 copies of three size variants of the capsid proteins, VP1, and VP3, which differ by the presence of an N-terminal extension in the minor protein VP1. The capsid has a channel at the 5-fold axis and there are densities extending the 5-fold axis into the interior of the capsid. The capsid encapsulates the genomic ssDNA. Binding to the host receptors also induces capsid rearrangements leading to surface exposure of VP1 N-terminus, specifically its phospholipase A2-like region. The additional N-terminal region of isoform Minor capsid protein VP1, called VP1u, may serve as a lipolytic enzyme to breach the endosomal membrane during entry into host cell and might contribute to virus transport to the nucleus. This is Minor capsid protein VP1 (VP1) from Primate bocaparvovirus 1 (strain Human bocavirus 1 type 1) (HBoV1).